Here is a 215-residue protein sequence, read N- to C-terminus: Large ribosomal subunit protein uL4 (215 aa).

The tract at residues 51 to 88 (KGMGEVSGTTKKPYRQKGTGNARQGSLRAPQFRTGGAV) is disordered.

It belongs to the universal ribosomal protein uL4 family. Part of the 50S ribosomal subunit.

In terms of biological role, one of the primary rRNA binding proteins, this protein initially binds near the 5'-end of the 23S rRNA. It is important during the early stages of 50S assembly. It makes multiple contacts with different domains of the 23S rRNA in the assembled 50S subunit and ribosome. Functionally, forms part of the polypeptide exit tunnel. This chain is Large ribosomal subunit protein uL4, found in Granulibacter bethesdensis (strain ATCC BAA-1260 / CGDNIH1).